The following is a 293-amino-acid chain: 33 kDa chaperonin (293 aa).

2 cysteine pairs are disulfide-bonded: cysteine 237–cysteine 239 and cysteine 271–cysteine 274.

This sequence belongs to the HSP33 family. In terms of processing, under oxidizing conditions two disulfide bonds are formed involving the reactive cysteines. Under reducing conditions zinc is bound to the reactive cysteines and the protein is inactive.

The protein resides in the cytoplasm. Its function is as follows. Redox regulated molecular chaperone. Protects both thermally unfolding and oxidatively damaged proteins from irreversible aggregation. Plays an important role in the bacterial defense system toward oxidative stress. This chain is 33 kDa chaperonin, found in Haemophilus influenzae (strain PittEE).